A 364-amino-acid polypeptide reads, in one-letter code: MYIKSVHLINFRNYDDMYLELSPNTNIFVGNNAQGKTNILESIYYSSIGKSHRTNKDKDLIKWDKNNTYLRTYVSRERLDKTIDINIFKNGKKAITVNKIKIKKISELMGNLNVVMFSPEDLRIIKDSPGNRRKFLDIELCKINNVYYHDLVQYNKILSERNTALKNWNNRINDIIDVYDEQLSKYGAFIIKERNKYLDKLNIIGKNIHKKITNDLEDINFRYLTNIKDFDNAEKELLMLFKKNRKKDLERNSTSIGPHRDDFEVSINNIDTRIFGSQGQQRTAVLTLKFASLEIIKNIIGEYPALLLDDVLSELDSNRQKFVLNSIDKIQTIITCTGIEEIDKYLDKKQSQLYLVNNGKIKKV.

Position 30–37 (30–37 (GNNAQGKT)) interacts with ATP.

The protein belongs to the RecF family.

It localises to the cytoplasm. In terms of biological role, the RecF protein is involved in DNA metabolism; it is required for DNA replication and normal SOS inducibility. RecF binds preferentially to single-stranded, linear DNA. It also seems to bind ATP. The sequence is that of DNA replication and repair protein RecF from Clostridium botulinum (strain Loch Maree / Type A3).